We begin with the raw amino-acid sequence, 273 residues long: Trypsin-6 (273 aa).

A signal peptide spans 1-22 (MLSKFTAILLAVHIALFACALT). The propeptide at 23 to 46 (QAEKRHKLTRPAFHPNAPYLAGKR) is activation peptide. One can recognise a Peptidase S1 domain in the interval 47–272 (IVGGFVIDIS…VRDWIRETSG (226 aa)). Cys-72 and Cys-88 form a disulfide bridge. Active-site charge relay system residues include His-87 and Asp-132. Disulfide bonds link Cys-197-Cys-213 and Cys-224-Cys-248. Catalysis depends on Ser-228, which acts as the Charge relay system.

Belongs to the peptidase S1 family. In terms of tissue distribution, expressed in the midgut. Expression levels drop a few hours after blood feeding and pick up again 28 hours later.

It localises to the secreted. It carries out the reaction Preferential cleavage: Arg-|-Xaa, Lys-|-Xaa.. In terms of biological role, constitutive trypsin that is expressed 2 days after emergence, coinciding with host seeking behavior of the female. In Anopheles gambiae (African malaria mosquito), this protein is Trypsin-6 (TRYP6).